The chain runs to 526 residues: Acetyl-CoA hydrolase (526 aa).

Position 277-281 (277-281) interacts with CoA; it reads GIGNI. Glu-302 serves as the catalytic 5-glutamyl coenzyme A thioester intermediate. The CoA site is built by Asn-392 and Gly-396.

It belongs to the acetyl-CoA hydrolase/transferase family.

Its subcellular location is the cytoplasm. It catalyses the reaction acetyl-CoA + H2O = acetate + CoA + H(+). Presumably involved in regulating the intracellular acetyl-CoA pool for fatty acid and cholesterol synthesis and fatty acid oxidation. The sequence is that of Acetyl-CoA hydrolase (ACH1) from Candida glabrata (strain ATCC 2001 / BCRC 20586 / JCM 3761 / NBRC 0622 / NRRL Y-65 / CBS 138) (Yeast).